The sequence spans 61 residues: MITALTALLVLISLGLIVTVPVALATPGEWENSKSDFTKGFQAWVALVLVIAAADGVASSL.

2 helical membrane passes run 5 to 25 (LTALLVLISLGLIVTVPVALA) and 38 to 58 (TKGFQAWVALVLVIAAADGVA).

It belongs to the PsbZ family. As to quaternary structure, PSII is composed of 1 copy each of membrane proteins PsbA, PsbB, PsbC, PsbD, PsbE, PsbF, PsbH, PsbI, PsbJ, PsbK, PsbL, PsbM, PsbT, PsbX, PsbY, PsbZ, Psb30/Ycf12, at least 3 peripheral proteins of the oxygen-evolving complex and a large number of cofactors. It forms dimeric complexes.

The protein localises to the plastid. It localises to the chloroplast thylakoid membrane. May control the interaction of photosystem II (PSII) cores with the light-harvesting antenna, regulates electron flow through the 2 photosystem reaction centers. PSII is a light-driven water plastoquinone oxidoreductase, using light energy to abstract electrons from H(2)O, generating a proton gradient subsequently used for ATP formation. The chain is Photosystem II reaction center protein Z from Phaeodactylum tricornutum (strain CCAP 1055/1).